The chain runs to 127 residues: Putative 2Fe-2S ferredoxin (127 aa).

[2Fe-2S] cluster is bound by residues C23, C54, and C58.

The protein belongs to the 2Fe2S Shethna-type ferredoxin family. It depends on [2Fe-2S] cluster as a cofactor.

Functionally, ferredoxins are iron-sulfur proteins that transfer electrons in a wide variety of metabolic reactions. The chain is Putative 2Fe-2S ferredoxin (cbiW) from Priestia megaterium (Bacillus megaterium).